Reading from the N-terminus, the 361-residue chain is tRNA 2-selenouridine synthase (361 aa).

In terms of domain architecture, Rhodanese spans 11 to 134 (ALLERPLIDV…MRQCVNAEIE (124 aa)). Cys-94 serves as the catalytic S-selanylcysteine intermediate.

It belongs to the SelU family. Monomer.

It catalyses the reaction 5-methylaminomethyl-2-thiouridine(34) in tRNA + selenophosphate + (2E)-geranyl diphosphate + H2O + H(+) = 5-methylaminomethyl-2-selenouridine(34) in tRNA + (2E)-thiogeraniol + phosphate + diphosphate. The enzyme catalyses 5-methylaminomethyl-2-thiouridine(34) in tRNA + (2E)-geranyl diphosphate = 5-methylaminomethyl-S-(2E)-geranyl-thiouridine(34) in tRNA + diphosphate. It carries out the reaction 5-methylaminomethyl-S-(2E)-geranyl-thiouridine(34) in tRNA + selenophosphate + H(+) = 5-methylaminomethyl-2-(Se-phospho)selenouridine(34) in tRNA + (2E)-thiogeraniol. The catalysed reaction is 5-methylaminomethyl-2-(Se-phospho)selenouridine(34) in tRNA + H2O = 5-methylaminomethyl-2-selenouridine(34) in tRNA + phosphate. Functionally, involved in the post-transcriptional modification of the uridine at the wobble position (U34) of tRNA(Lys), tRNA(Glu) and tRNA(Gln). Catalyzes the conversion of 2-thiouridine (S2U-RNA) to 2-selenouridine (Se2U-RNA). Acts in a two-step process involving geranylation of 2-thiouridine (S2U) to S-geranyl-2-thiouridine (geS2U) and subsequent selenation of the latter derivative to 2-selenouridine (Se2U) in the tRNA chain. This is tRNA 2-selenouridine synthase from Chromohalobacter salexigens (strain ATCC BAA-138 / DSM 3043 / CIP 106854 / NCIMB 13768 / 1H11).